Here is a 215-residue protein sequence, read N- to C-terminus: Cytochrome c biogenesis ATP-binding export protein CcmA (215 aa).

The ABC transporter domain maps to 3-211 (LTAENLAARR…KMTGFAGVDR (209 aa)). Position 35 to 42 (35 to 42 (GRNGSGKS)) interacts with ATP.

This sequence belongs to the ABC transporter superfamily. CcmA exporter (TC 3.A.1.107) family. In terms of assembly, the complex is composed of two ATP-binding proteins (CcmA) and two transmembrane proteins (CcmB).

Its subcellular location is the cell inner membrane. The catalysed reaction is heme b(in) + ATP + H2O = heme b(out) + ADP + phosphate + H(+). Functionally, part of the ABC transporter complex CcmAB involved in the biogenesis of c-type cytochromes; once thought to export heme, this seems not to be the case, but its exact role is uncertain. Responsible for energy coupling to the transport system. The chain is Cytochrome c biogenesis ATP-binding export protein CcmA from Rhizobium etli (strain ATCC 51251 / DSM 11541 / JCM 21823 / NBRC 15573 / CFN 42).